An 88-amino-acid polypeptide reads, in one-letter code: Small ribosomal subunit protein uS17 (88 aa).

It belongs to the universal ribosomal protein uS17 family. Part of the 30S ribosomal subunit.

One of the primary rRNA binding proteins, it binds specifically to the 5'-end of 16S ribosomal RNA. This Lactobacillus acidophilus (strain ATCC 700396 / NCK56 / N2 / NCFM) protein is Small ribosomal subunit protein uS17.